Reading from the N-terminus, the 555-residue chain is Urocanate hydratase (555 aa).

Residues 52–53, Q130, 176–178, E196, R201, 242–243, 263–267, 273–274, and Y322 contribute to the NAD(+) site; these read GG, GMG, NA, QTSAH, and YL. Residue C410 is part of the active site. Residue G492 participates in NAD(+) binding.

The protein belongs to the urocanase family. The cofactor is NAD(+).

The protein localises to the cytoplasm. The enzyme catalyses 4-imidazolone-5-propanoate = trans-urocanate + H2O. It functions in the pathway amino-acid degradation; L-histidine degradation into L-glutamate; N-formimidoyl-L-glutamate from L-histidine: step 2/3. Functionally, catalyzes the conversion of urocanate to 4-imidazolone-5-propionate. This is Urocanate hydratase from Shewanella baltica (strain OS223).